Here is a 181-residue protein sequence, read N- to C-terminus: MVIILFIRRRLATNPLSTQMCIAGTISGSGDCLAQYLSHNQEWDRWRTARFSFLSSCFMAPSLFIWFRLLEKVKGNNKSLLLVKKLCIDQLCFSPCFNAAILFNLRLLQHQSAEKSWDLLKEDWFNIYATSLKVWPFVQVVNLCFVPLNYRVILNQVVAFFWNCYLSYITQKPIDHIEQFY.

4 helical membrane-spanning segments follow: residues Met-20–Leu-37, Phe-51–Phe-67, Leu-86–Phe-103, and Val-152–Ile-169.

This sequence belongs to the peroxisomal membrane protein PXMP2/4 family.

It is found in the mitochondrion inner membrane. Its function is as follows. Involved in mitochondria homeostasis. In Caenorhabditis elegans, this protein is Mitochondrial inner membrane protein Mpv17.